The chain runs to 648 residues: Threonine--tRNA ligase (648 aa).

One can recognise a TGS domain in the interval Met1–Thr61. Positions Asp243–Pro549 are catalytic. 3 residues coordinate Zn(2+): Cys349, His400, and His526.

The protein belongs to the class-II aminoacyl-tRNA synthetase family. As to quaternary structure, homodimer. The cofactor is Zn(2+).

It localises to the cytoplasm. The catalysed reaction is tRNA(Thr) + L-threonine + ATP = L-threonyl-tRNA(Thr) + AMP + diphosphate + H(+). Catalyzes the attachment of threonine to tRNA(Thr) in a two-step reaction: L-threonine is first activated by ATP to form Thr-AMP and then transferred to the acceptor end of tRNA(Thr). Also edits incorrectly charged L-seryl-tRNA(Thr). The polypeptide is Threonine--tRNA ligase (Orientia tsutsugamushi (strain Boryong) (Rickettsia tsutsugamushi)).